The sequence spans 185 residues: Ribosome-recycling factor (185 aa).

This sequence belongs to the RRF family.

It localises to the cytoplasm. Its function is as follows. Responsible for the release of ribosomes from messenger RNA at the termination of protein biosynthesis. May increase the efficiency of translation by recycling ribosomes from one round of translation to another. This chain is Ribosome-recycling factor, found in Ehrlichia chaffeensis (strain ATCC CRL-10679 / Arkansas).